Here is a 557-residue protein sequence, read N- to C-terminus: Potassium-transporting ATPase potassium-binding subunit (557 aa).

12 helical membrane passes run 5–25, 63–83, 132–152, 170–190, 253–273, 283–303, 329–349, 356–376, 379–399, 416–436, 484–504, and 526–546; these read GFLL…PLGS, LSAI…MLLG, GLTV…FALI, LLRI…LFFI, FVQM…FGEV, LLWA…WAEV, VLVS…AVIA, ALGG…FGGV, GLYG…LMIG, LTAL…ALAM, LLAL…MAIA, and LFVG…FIPA.

It belongs to the KdpA family. The system is composed of three essential subunits: KdpA, KdpB and KdpC.

The protein resides in the cell inner membrane. In terms of biological role, part of the high-affinity ATP-driven potassium transport (or Kdp) system, which catalyzes the hydrolysis of ATP coupled with the electrogenic transport of potassium into the cytoplasm. This subunit binds the periplasmic potassium ions and delivers the ions to the membrane domain of KdpB through an intramembrane tunnel. This chain is Potassium-transporting ATPase potassium-binding subunit, found in Escherichia coli O6:H1 (strain CFT073 / ATCC 700928 / UPEC).